The sequence spans 145 residues: Neuromedin-S (145 aa).

Positions 1–25 are cleaved as a signal peptide; that stretch reads MKYLAQFPSILAIYCFCLLQIPSSG. 3 consecutive propeptides follow at residues 26-64, 65-100, and 101-103; these read FPRP…IYKR, FLFH…ADRR, and MKT. N136 bears the Asparagine amide mark. Residues 139–145 constitute a propeptide that is removed on maturation; sequence NLDFDTW.

This sequence belongs to the NmU family.

The protein resides in the secreted. Its function is as follows. Implicated in the regulation of circadian rhythms through autocrine and/or paracrine actions. In Bos taurus (Bovine), this protein is Neuromedin-S (NMS).